The primary structure comprises 548 residues: Splicing factor U2af large subunit B (548 aa).

Residues 1–82 (MADDHAAAAD…DRDRDRDKDR (82 aa)) are compositionally biased toward basic and acidic residues. Residues 1-156 (MADDHAAAAD…SKRVSGFDMA (156 aa)) form a disordered region. Over residues 83–93 (DRHHRHHRERR) the composition is skewed to basic residues. The segment covering 94-120 (EHRDRSDDHDRHRSRDSERRRDHERDG) has biased composition (basic and acidic residues). Residues 121 to 149 (RRRHRSRSRSRSRGRDRRSRSRSRSKSKR) show a composition bias toward basic residues. 3 RRM domains span residues 214 to 297 (RRVY…RPTD), 334 to 412 (DRIF…RANQ), and 453 to 539 (QVVS…YPEN).

The protein belongs to the splicing factor SR family.

The protein localises to the nucleus. Its function is as follows. Necessary for the splicing of pre-mRNA. The sequence is that of Splicing factor U2af large subunit B (U2AF65B) from Oryza sativa subsp. japonica (Rice).